Consider the following 270-residue polypeptide: tRNA pseudouridine synthase A (270 aa).

Catalysis depends on D60, which acts as the Nucleophile. The RNA binding stretch occupies residues 107-111 (FHARF). Y118 contacts substrate. The interval 168 to 172 (QCQSR) is interaction with tRNA.

The protein belongs to the tRNA pseudouridine synthase TruA family. As to quaternary structure, homodimer.

The enzyme catalyses uridine(38/39/40) in tRNA = pseudouridine(38/39/40) in tRNA. Formation of pseudouridine at positions 38, 39 and 40 in the anticodon stem and loop of transfer RNAs. The polypeptide is tRNA pseudouridine synthase A (Escherichia coli O139:H28 (strain E24377A / ETEC)).